A 489-amino-acid polypeptide reads, in one-letter code: Betaine aldehyde dehydrogenase (489 aa).

The K(+) site is built by threonine 26 and aspartate 93. 150–152 (GAW) is a binding site for NAD(+). Residue lysine 162 is the Charge relay system of the active site. 176–179 (KPSE) is an NAD(+) binding site. Position 180 (valine 180) interacts with K(+). An NAD(+)-binding site is contributed by 229-232 (GVET). Leucine 245 is a K(+) binding site. Residue glutamate 251 is the Proton acceptor of the active site. NAD(+) contacts are provided by glycine 253, cysteine 285, and glutamate 386. The active-site Nucleophile is cysteine 285. Cysteine 285 is subject to Cysteine sulfenic acid (-SOH). K(+) is bound by residues lysine 456 and glycine 459. The active-site Charge relay system is glutamate 463.

This sequence belongs to the aldehyde dehydrogenase family. In terms of assembly, dimer of dimers. The cofactor is K(+).

The catalysed reaction is betaine aldehyde + NAD(+) + H2O = glycine betaine + NADH + 2 H(+). Its pathway is amine and polyamine biosynthesis; betaine biosynthesis via choline pathway; betaine from betaine aldehyde: step 1/1. Its function is as follows. Involved in the biosynthesis of the osmoprotectant glycine betaine. Catalyzes the irreversible oxidation of betaine aldehyde to the corresponding acid. The protein is Betaine aldehyde dehydrogenase of Paraburkholderia phymatum (strain DSM 17167 / CIP 108236 / LMG 21445 / STM815) (Burkholderia phymatum).